The following is a 247-amino-acid chain: Ubiquinone biosynthesis O-methyltransferase (247 aa).

Residues arginine 39, glycine 70, aspartate 91, and methionine 134 each contribute to the S-adenosyl-L-methionine site.

The protein belongs to the methyltransferase superfamily. UbiG/COQ3 family.

The enzyme catalyses a 3-demethylubiquinol + S-adenosyl-L-methionine = a ubiquinol + S-adenosyl-L-homocysteine + H(+). It catalyses the reaction a 3-(all-trans-polyprenyl)benzene-1,2-diol + S-adenosyl-L-methionine = a 2-methoxy-6-(all-trans-polyprenyl)phenol + S-adenosyl-L-homocysteine + H(+). Its pathway is cofactor biosynthesis; ubiquinone biosynthesis. In terms of biological role, O-methyltransferase that catalyzes the 2 O-methylation steps in the ubiquinone biosynthetic pathway. The chain is Ubiquinone biosynthesis O-methyltransferase from Cereibacter sphaeroides (strain ATCC 17023 / DSM 158 / JCM 6121 / CCUG 31486 / LMG 2827 / NBRC 12203 / NCIMB 8253 / ATH 2.4.1.) (Rhodobacter sphaeroides).